A 481-amino-acid polypeptide reads, in one-letter code: Aspartyl/glutamyl-tRNA(Asn/Gln) amidotransferase subunit B (481 aa).

The protein belongs to the GatB/GatE family. GatB subfamily. Heterotrimer of A, B and C subunits.

The enzyme catalyses L-glutamyl-tRNA(Gln) + L-glutamine + ATP + H2O = L-glutaminyl-tRNA(Gln) + L-glutamate + ADP + phosphate + H(+). It carries out the reaction L-aspartyl-tRNA(Asn) + L-glutamine + ATP + H2O = L-asparaginyl-tRNA(Asn) + L-glutamate + ADP + phosphate + 2 H(+). Its function is as follows. Allows the formation of correctly charged Asn-tRNA(Asn) or Gln-tRNA(Gln) through the transamidation of misacylated Asp-tRNA(Asn) or Glu-tRNA(Gln) in organisms which lack either or both of asparaginyl-tRNA or glutaminyl-tRNA synthetases. The reaction takes place in the presence of glutamine and ATP through an activated phospho-Asp-tRNA(Asn) or phospho-Glu-tRNA(Gln). This is Aspartyl/glutamyl-tRNA(Asn/Gln) amidotransferase subunit B from Carboxydothermus hydrogenoformans (strain ATCC BAA-161 / DSM 6008 / Z-2901).